The primary structure comprises 241 residues: Small ribosomal subunit protein uS3 (241 aa).

Residues 39–108 enclose the KH type-2 domain; the sequence is IREGVLKLLK…NLKVEVKVIE (70 aa). Residues 215–241 are disordered; that stretch reads SQRVSEKAPMNNDRRFNNKNNNRGGRK. A compositionally biased stretch (low complexity) spans 232-241; that stretch reads NKNNNRGGRK.

Belongs to the universal ribosomal protein uS3 family. As to quaternary structure, part of the 30S ribosomal subunit. Forms a tight complex with proteins S10 and S14.

Binds the lower part of the 30S subunit head. Binds mRNA in the 70S ribosome, positioning it for translation. The sequence is that of Small ribosomal subunit protein uS3 from Mesoplasma florum (strain ATCC 33453 / NBRC 100688 / NCTC 11704 / L1) (Acholeplasma florum).